The primary structure comprises 150 residues: Group IIC secretory phospholipase A2 (150 aa).

Residues 1–20 form the signal peptide; that stretch reads MKGIAVFLVFIFCWTTSTLS. Disulfide bonds link Cys46/Cys143, Cys48/Cys64, Cys63/Cys121, Cys69/Cys150, Cys70/Cys114, Cys79/Cys107, Cys97/Cys112, and Cys99/Cys105. Residues Tyr47, Gly49, and Gly51 each contribute to the Ca(2+) site. His67 is an active-site residue. Asp68 lines the Ca(2+) pocket. The N-linked (GlcNAc...) asparagine glycan is linked to Asn92. Residue Asp115 is part of the active site.

It belongs to the phospholipase A2 family. Ca(2+) serves as cofactor.

The protein localises to the secreted. It catalyses the reaction a 1,2-diacyl-sn-glycero-3-phosphocholine + H2O = a 1-acyl-sn-glycero-3-phosphocholine + a fatty acid + H(+). PA2 catalyzes the calcium-dependent hydrolysis of the 2-acyl groups in 3-sn-phosphoglycerides. This chain is Group IIC secretory phospholipase A2 (Pla2g2c), found in Rattus norvegicus (Rat).